Consider the following 235-residue polypeptide: Large ribosomal subunit protein uL1 (235 aa).

This sequence belongs to the universal ribosomal protein uL1 family. Part of the 50S ribosomal subunit.

In terms of biological role, binds directly to 23S rRNA. The L1 stalk is quite mobile in the ribosome, and is involved in E site tRNA release. Its function is as follows. Protein L1 is also a translational repressor protein, it controls the translation of the L11 operon by binding to its mRNA. The protein is Large ribosomal subunit protein uL1 of Synechococcus sp. (strain CC9902).